Consider the following 511-residue polypeptide: Aminotransferase FGSG_17085 (511 aa).

165 to 166 (GA) provides a ligand contact to pyridoxal 5'-phosphate. Substrate is bound at residue tyrosine 200. Aspartate 310 contacts pyridoxal 5'-phosphate. Lysine 339 carries the N6-(pyridoxal phosphate)lysine modification. Residue glycine 371 participates in substrate binding. Pyridoxal 5'-phosphate is bound at residue 372–373 (HT).

It belongs to the class-III pyridoxal-phosphate-dependent aminotransferase family. It depends on pyridoxal 5'-phosphate as a cofactor.

It functions in the pathway secondary metabolite biosynthesis. Functionally, aminotransferase; part of the gene cluster that mediates the biosynthesis of the lipopeptide fusaristatin A. Fusaristatin A consists of a polyketide chain linked to three amino acid residues glutamine (Gln), dehydroalanine (dehydro-Ala), and beta-aminoisobutyric acid. The biosynthesis starts with formation of a linear polyketide chain by the highly reducing polyketide synthase PKS6. The gene cluster does not contain an acyl-CoA ligase or an acyl-transferase, and it is therefore predicted that the polyketide is transferred directly to the nonribosomal peptide synthetase NRPS7. Modules 1-3 from NRPS7 incorporate dehydro-Ala, Gln, and beta-aminoisobutyric acid in the compound, which is released by cyclization. The beta-aminoisobutyric acid units are most likely not freely available to the NRPS, but can be synthesized from thymine, which requires a dehydrogenase, a monooxygenase, and an aminotransferase. The fusaristatin A cluster contains a cytochrome P450 monooxygenase (FGSG_08207) and an aminotransferase (FGSG_17085), which theoretically can perform two of the enzymatic steps. The enzymes may however also be involved in biosynthesis of dehydroalanine or modification of the polyketide. The dehydro-Ala residue can be a result of cyclization, where serine is dehydrated. The last gene of the cluster encodes a protein with an A/B barrel domain found in variable enzymes, which hampers functional prediction. This chain is Aminotransferase FGSG_17085, found in Gibberella zeae (strain ATCC MYA-4620 / CBS 123657 / FGSC 9075 / NRRL 31084 / PH-1) (Wheat head blight fungus).